A 288-amino-acid polypeptide reads, in one-letter code: Bifunctional protein FolD (288 aa).

Residues 166-168 and Ile-232 each bind NADP(+); that span reads GAS.

It belongs to the tetrahydrofolate dehydrogenase/cyclohydrolase family. Homodimer.

It catalyses the reaction (6R)-5,10-methylene-5,6,7,8-tetrahydrofolate + NADP(+) = (6R)-5,10-methenyltetrahydrofolate + NADPH. The enzyme catalyses (6R)-5,10-methenyltetrahydrofolate + H2O = (6R)-10-formyltetrahydrofolate + H(+). Its pathway is one-carbon metabolism; tetrahydrofolate interconversion. Catalyzes the oxidation of 5,10-methylenetetrahydrofolate to 5,10-methenyltetrahydrofolate and then the hydrolysis of 5,10-methenyltetrahydrofolate to 10-formyltetrahydrofolate. This chain is Bifunctional protein FolD, found in Escherichia coli O8 (strain IAI1).